The primary structure comprises 253 residues: Glucosamine-6-phosphate deaminase (253 aa).

Catalysis depends on aspartate 67, which acts as the Proton acceptor; for enolization step. Residue asparagine 136 is the For ring-opening step of the active site. Histidine 138 (proton acceptor; for ring-opening step) is an active-site residue. The active-site For ring-opening step is the glutamate 143.

The protein belongs to the glucosamine/galactosamine-6-phosphate isomerase family. NagB subfamily.

The catalysed reaction is alpha-D-glucosamine 6-phosphate + H2O = beta-D-fructose 6-phosphate + NH4(+). Its pathway is amino-sugar metabolism; N-acetylneuraminate degradation; D-fructose 6-phosphate from N-acetylneuraminate: step 5/5. Its function is as follows. Catalyzes the reversible isomerization-deamination of glucosamine 6-phosphate (GlcN6P) to form fructose 6-phosphate (Fru6P) and ammonium ion. The chain is Glucosamine-6-phosphate deaminase from Thermoanaerobacter sp. (strain X514).